The following is a 327-amino-acid chain: RNA ligase 1 (327 aa).

It depends on Mg(2+) as a cofactor. Requires Mn(2+) as cofactor. Post-translationally, AMPylates itself (auto-AMPylation).

The catalysed reaction is ATP + (ribonucleotide)n-3'-hydroxyl + 5'-phospho-(ribonucleotide)m = (ribonucleotide)n+m + AMP + diphosphate.. Functionally, functions as an RNA ligase, in vitro. The ligation reaction entails three nucleotidyl transfer steps. In the first step, the RNA ligase reacts with ATP in the absence of nucleic acid to form a covalent ligase-AMP intermediate and release pyrophosphate. In step 2, the ligase-AMP binds to the nucleic acid and transfers the adenylate to the 5'-PO4 terminus to form an adenylylated intermediate. In step 3, the RNA ligase directs the attack of the 3'-OH on the 5'-phosphoanhydride linkage, resulting in a repaired 3'-5' phosphodiester and release of AMP. Exhibits selectivity for single-stranded RNA substrates and may not have nick-sealing activity on double-stranded DNA-RNA hybrids. May play a role in maintaining RNA integrity under stress conditions, for example in response to reactive oxygen species (ROS). The sequence is that of RNA ligase 1 from Mus musculus (Mouse).